A 523-amino-acid chain; its full sequence is 2-hydroxyisoflavanone synthase (523 aa).

A helical membrane pass occupies residues 2–22; it reads LVELAITLLVIALFIHLRPTL. Cysteine 450 contributes to the heme binding site.

This sequence belongs to the cytochrome P450 family. Heme serves as cofactor.

It is found in the microsome membrane. It catalyses the reaction (2S)-liquiritigenin + reduced [NADPH--hemoprotein reductase] + O2 = (2R,3S)-2,4',7-trihydroxyisoflavanone + oxidized [NADPH--hemoprotein reductase] + H2O + H(+). It carries out the reaction (2S)-naringenin + reduced [NADPH--hemoprotein reductase] + O2 = 2-hydroxy-2,3-dihydrogenistein + oxidized [NADPH--hemoprotein reductase] + H2O + H(+). Functionally, 2-hydroxyisoflavanone synthase, which catalyzes the hydroxylation associated with 1,2-aryl migration of flavanones. Converts liquiritigenin and naringenin into highly unstable precursors of the isoflavones daidzein and genistein. Acts only on substrates with (2S)-chirality. This is 2-hydroxyisoflavanone synthase (CYP93C2) from Glycyrrhiza echinata (Licorice).